The sequence spans 68 residues: Amphipathic peptide CT1 (68 aa).

An N-terminal signal peptide occupies residues 1-23 (MKTQIVILIVAVLFLQLVSQSDA). Leu36 is subject to Leucine amide. The propeptide occupies 40 to 68 (GLKNLDQYNDLFDGEISDADIKFLKDLMR).

Belongs to the non-disulfide-bridged peptide (NDBP) superfamily. Short antimicrobial peptide (group 4) family. Expressed by the venom gland.

The protein localises to the secreted. Its subcellular location is the target cell membrane. Functionally, amphipathic peptide that shows no antibacterial activity even at 50 uM but shows a low hemolytic activity against human erythrocytes. The chain is Amphipathic peptide CT1 from Mesomexovis subcristatus (Scorpion).